The sequence spans 204 residues: Protein PAXX (204 aa).

Positions 37 to 79 (FNLYVTDAAELWSTCFTPDSLAALKARFGLSAAEDITPRFRAA) constitute a PISA domain. S134 is modified (phosphoserine). The tract at residues 143–204 (EETAVSPRKS…PAGGVDFDET (62 aa)) is disordered. T145 is modified (phosphothreonine). Phosphoserine occurs at positions 148 and 152. Residues 171–204 (GPGPGVRRRCPGESLINPGFKSKKPAGGVDFDET) are mediates interaction with XRCC5/Ku80 and XRCC6/Ku70 and association with the non-homologous end joining core complex. An XLM motif is present at residues 190 to 204 (FKSKKPAGGVDFDET).

Belongs to the XRCC4-XLF family. PAXX subfamily. In terms of assembly, homodimer. Interacts with the DNA-bound XRCC5/Ku80 and XRCC6/Ku70 heterodimer (Ku complex); the interaction is direct. Associated component of the non-homologous end joining (NHEJ) complex, composed of the core proteins PRKDC, LIG4, XRCC4, XRCC6/Ku70, XRCC5/Ku86 and NHEJ1/XLF. Interacts with POLL (DNA polymerase lambda); promoting POLL recruitment to double-strand breaks (DSBs) and stimulation of the end-filling activity of POLL. In terms of processing, phosphorylation may inhibit interaction with the DNA-bound XRCC5/Ku80 and XRCC6/Ku70 heterodimer (Ku complex).

Its subcellular location is the nucleus. It is found in the chromosome. It localises to the cytoplasm. Non-essential DNA repair protein involved in DNA non-homologous end joining (NHEJ); participates in double-strand break (DSB) repair and V(D)J recombination. May act as a scaffold required for accumulation of the Ku heterodimer, composed of XRCC5/Ku80 and XRCC6/Ku70, at double-strand break sites and promote the assembly and/or stability of the NHEJ machinery. Involved in NHEJ by promoting the ligation of blunt-ended DNA ends. Together with NHEJ1/XLF, collaborates with DNA polymerase lambda (POLL) to promote joining of non-cohesive DNA ends. Constitutes a non-essential component of classical NHEJ: has a complementary but distinct function with NHEJ1/XLF in DNA repair. Able to restrict infection by herpesvirus 1 (HSV-1) via an unknown mechanism. The polypeptide is Protein PAXX (Homo sapiens (Human)).